The chain runs to 128 residues: Small ribosomal subunit protein uS8c (128 aa).

It belongs to the universal ribosomal protein uS8 family. In terms of assembly, part of the 30S ribosomal subunit.

The protein localises to the plastid. Its subcellular location is the chloroplast. In terms of biological role, one of the primary rRNA binding proteins, it binds directly to 16S rRNA central domain where it helps coordinate assembly of the platform of the 30S subunit. The polypeptide is Small ribosomal subunit protein uS8c (rps8) (Welwitschia mirabilis (Tree tumbo)).